The primary structure comprises 534 residues: CTP synthase (534 aa).

An amidoligase domain region spans residues 1-267; sequence MTKYIFVTGG…DQIVCDHLKL (267 aa). A CTP-binding site is contributed by serine 13. Serine 13 provides a ligand contact to UTP. 14 to 19 contacts ATP; sequence SIGKGI. Tyrosine 54 provides a ligand contact to L-glutamine. Aspartate 71 contributes to the ATP binding site. Residues aspartate 71 and glutamate 141 each coordinate Mg(2+). CTP is bound by residues 148-150, 188-193, and lysine 224; these read DIE and KTKPTQ. UTP-binding positions include 188–193 and lysine 224; that span reads KTKPTQ. In terms of domain architecture, Glutamine amidotransferase type-1 spans 292–534; that stretch reads KIALVGKYVE…FVTAAVENAK (243 aa). Glycine 354 is an L-glutamine binding site. Catalysis depends on cysteine 381, which acts as the Nucleophile; for glutamine hydrolysis. Residues 382–385, glutamate 405, and arginine 463 contribute to the L-glutamine site; that span reads LGMQ. Catalysis depends on residues histidine 508 and glutamate 510.

It belongs to the CTP synthase family. In terms of assembly, homotetramer.

It catalyses the reaction UTP + L-glutamine + ATP + H2O = CTP + L-glutamate + ADP + phosphate + 2 H(+). The enzyme catalyses L-glutamine + H2O = L-glutamate + NH4(+). It carries out the reaction UTP + NH4(+) + ATP = CTP + ADP + phosphate + 2 H(+). It participates in pyrimidine metabolism; CTP biosynthesis via de novo pathway; CTP from UDP: step 2/2. With respect to regulation, allosterically activated by GTP, when glutamine is the substrate; GTP has no effect on the reaction when ammonia is the substrate. The allosteric effector GTP functions by stabilizing the protein conformation that binds the tetrahedral intermediate(s) formed during glutamine hydrolysis. Inhibited by the product CTP, via allosteric rather than competitive inhibition. Its function is as follows. Catalyzes the ATP-dependent amination of UTP to CTP with either L-glutamine or ammonia as the source of nitrogen. Regulates intracellular CTP levels through interactions with the four ribonucleotide triphosphates. The chain is CTP synthase from Streptococcus thermophilus (strain CNRZ 1066).